The sequence spans 791 residues: MADDKVAILTDDEEEQKRKYVLADPFNGISREPEPPSNETPSSTETSAIPEEEIDWIEKHCVKINNDLLISKVFYFFFYSAYGSLYPLLPVYYKQLGMSPSQSGLLVGIRYFIEFCSAPFWGVVADRFKKGKIVLLFSLLCWVLFNLGIGFVKPATLRCVPKIRPTTHPTNASHQLTILPTNSSFTSFLTISPKMREKRNLLETRLNVSDTVTLPTAPNMNSEPTLQPQTGEITNRMMDLTLNSSTATPVSPGSVTKETTTVIVTTTKSLPSDQVMLVYDQQEVEAIFLVILVVVIIGEFFSASSVTIVDTVTLQYLGKHRDRYGLQRMWGSLGWGLAMLSVGIGIDYTHIEVLIDGKGCKPPEYRNYQIVFIVFGVLMTMALIVATQFRFRYNHFKNDDSKGKEVEIPQVERNNSTESSEETPTTTSHSQAFNFWDLIKLLCSVQYGSVLFVAWFMGFGYGFVFTFLYWHLEDLNGTTTLFGVCSVLSHVSELTAYFFSHKLIELIGHIRVLYIGLACNTARYIYISYLENAWTVLPMEVLQGVTHAAIWAACISYLSAAVPPELRTSAQGILQGLHLGLGRGCGAMIGGVLVNYFGAAATFRGIGMACLVILLLFALIQWLAVPDEEEDKTMLAERIPVPSSPVPIATIDLVQQQTEDVMPRIEPRLPPKKTKHQEEQEDVNKPAWGVSSSPWVTFVYALYQIKEMMQLTRDNRASEIQPLQGTNENRENSPAGRAQPVPCETHSDPSRNQPSPDAAASQTQTSPAHPSVDPCTEESEEQQAQLAAGGH.

Ala-2 carries the post-translational modification N-acetylalanine. Residue Thr-10 is modified to Phosphothreonine. Residues 22–47 form a disordered region; that stretch reads LADPFNGISREPEPPSNETPSSTETS. The span at 37-47 shows a compositional bias: low complexity; sequence SNETPSSTETS. The next 6 membrane-spanning stretches (helical) occupy residues 73-93, 105-125, 132-152, 286-306, 335-355, and 369-389; these read VFYF…PVYY, LLVG…GVVA, KIVL…IGFV, AIFL…ASSV, WGLA…EVLI, and QIVF…ATQF. Residues 407–427 are disordered; it reads EIPQVERNNSTESSEETPTTT. Low complexity predominate over residues 416-427; it reads STESSEETPTTT. The next 6 membrane-spanning stretches (helical) occupy residues 450-470, 479-499, 507-527, 544-564, 579-599, and 605-625; these read VLFV…FLYW, TTLF…AYFF, IGHI…YIYI, GVTH…AVPP, LGLG…YFGA, and GIGM…WLAV. Disordered stretches follow at residues 662–687 and 723–791; these read MPRI…NKPA and LQGT…AGGH. The segment covering 750 to 768 has biased composition (polar residues); the sequence is SRNQPSPDAAASQTQTSPA. A compositionally biased stretch (low complexity) spans 782-791; sequence QQAQLAAGGH.

The protein belongs to the major facilitator superfamily. MFSD6 family. As to quaternary structure, may interact with HLA-B62. Widely expressed. Expression levels in peripheral blood mononuclear cells are highly variable between individuals, including no expression at all.

It localises to the membrane. The polypeptide is Major facilitator superfamily domain-containing protein 6 (MFSD6) (Homo sapiens (Human)).